The chain runs to 156 residues: Small ribosomal subunit protein uS7 (156 aa).

This sequence belongs to the universal ribosomal protein uS7 family. In terms of assembly, part of the 30S ribosomal subunit. Contacts proteins S9 and S11.

One of the primary rRNA binding proteins, it binds directly to 16S rRNA where it nucleates assembly of the head domain of the 30S subunit. Is located at the subunit interface close to the decoding center, probably blocks exit of the E-site tRNA. The chain is Small ribosomal subunit protein uS7 from Erwinia tasmaniensis (strain DSM 17950 / CFBP 7177 / CIP 109463 / NCPPB 4357 / Et1/99).